Here is a 316-residue protein sequence, read N- to C-terminus: 2-phospho-L-lactate guanylyltransferase (316 aa).

Residues 72 to 85 (TGVSTEAVSTSTST) show a composition bias toward low complexity. Disordered stretches follow at residues 72–107 (TGVS…PTHT) and 119–138 (LRDD…DGDK). A compositionally biased stretch (polar residues) spans 92 to 107 (HNAASDNYVSQSPTHT).

The protein belongs to the CofC family. As to quaternary structure, homodimer.

The catalysed reaction is (2S)-2-phospholactate + GTP + H(+) = (2S)-lactyl-2-diphospho-5'-guanosine + diphosphate. The protein operates within cofactor biosynthesis; coenzyme F420 biosynthesis. Guanylyltransferase that catalyzes the activation of (2S)-2-phospholactate (2-PL) as (2S)-lactyl-2-diphospho-5'-guanosine, via the condensation of 2-PL with GTP. It is involved in the biosynthesis of coenzyme F420, a hydride carrier cofactor. This is 2-phospho-L-lactate guanylyltransferase from Haloquadratum walsbyi (strain DSM 16790 / HBSQ001).